The following is a 314-amino-acid chain: Putative gluconeogenesis factor (314 aa).

This sequence belongs to the gluconeogenesis factor family.

The protein localises to the cytoplasm. Required for morphogenesis under gluconeogenic growth conditions. The protein is Putative gluconeogenesis factor of Thermotoga maritima (strain ATCC 43589 / DSM 3109 / JCM 10099 / NBRC 100826 / MSB8).